The sequence spans 1471 residues: Gag-Pol polyprotein (1471 aa).

G2 carries the N-myristoyl glycine; by host lipid modification. The tract at residues 7-31 (VLSGKKTDELEKVRLRPGGKKRYCL) is interaction with Gp41. The Nuclear export signal motif lies at 16–22 (LEKVRLR). Residues 26–32 (KKRYCLK) carry the Nuclear localization signal motif. Residues 105 to 114 (QRHLAADTEK) show a composition bias toward basic and acidic residues. The interval 105–130 (QRHLAADTEKMPATSRPTAPPSGGNY) is disordered. Residue Y130 is modified to Phosphotyrosine; by host. The segment at 186 to 223 (NCVGDHQAAMQIIREIINEEAADWDQQHPIPGPLPAGQ) is interaction with human PPIA/CYPA and NUP153. The tract at residues 274-360 (YNPTNILDIK…GGPGQKARLM (87 aa)) is dimerization/Multimerization of capsid protein p24. 2 CCHC-type zinc fingers span residues 388 to 405 (VTCWNCGKVGHTAKQCRA) and 409 to 426 (QGCWKCGKQGHIMSKCPE). Residues 441-508 (ASQLPHDPSA…PRETLQGGDR (68 aa)) form a disordered region. Over residues 484 to 501 (DAEKLHEDGETAEREPRE) the composition is skewed to basic and acidic residues. The interval 513–517 (PQFSL) is dimerization of protease. Residues 533–602 (EVLLDTGADD…PINIFGRNIL (70 aa)) form the Peptidase A2 domain. The active-site For protease activity; shared with dimeric partner is the D537. Dimerization of protease stretches follow at residues 561–567 (GIGGFIN) and 600–612 (NILNTLGMTLNFP). In terms of domain architecture, Reverse transcriptase spans 656–846 (GQLEEAPPTN…PFKWMGYELW (191 aa)). D721, D796, and D797 together coordinate Mg(2+). Residues 838–846 (FKWMGYELW) are RT 'primer grip'. A Tryptophan repeat motif motif is present at residues 1008–1024 (WDQWWTDYWQVTWIPEW). The 124-residue stretch at 1044 to 1167 (LEKVETYYTD…VDHLVSQGIR (124 aa)) folds into the RNase H type-1 domain. Mg(2+) contacts are provided by D1053, E1088, D1108, and D1159. An Integrase-type zinc finger spans residues 1173 to 1214 (EKIEPAQEEHEKYHGNVKELVHKFGLPQLVAKQIVNSCDKCQ). Zn(2+)-binding residues include H1182, H1186, C1210, and C1213. In terms of domain architecture, Integrase catalytic spans 1224 to 1375 (VNAELGTWQM…PAERLVNMIT (152 aa)). 3 residues coordinate Mg(2+): D1234, D1286, and E1322. Positions 1393–1440 (FQVYYREGRDQLWKGPGELLWKGEGAVLIKVGTEIKVIPRRKAKIIRH) form a DNA-binding region, integrase-type.

As to quaternary structure, homotrimer; further assembles as hexamers of trimers. Interacts with gp41 (via C-terminus). Interacts with host CALM1; this interaction induces a conformational change in the Matrix protein, triggering exposure of the myristate group. Interacts with host AP3D1; this interaction allows the polyprotein trafficking to multivesicular bodies during virus assembly. Part of the pre-integration complex (PIC) which is composed of viral genome, matrix protein, Vpr and integrase. Homodimer; the homodimer further multimerizes as homohexamers or homopentamers. Interacts with human PPIA/CYPA. Interacts with human NUP153. Interacts with host PDZD8; this interaction stabilizes the capsid. Interacts with monkey TRIM5; this interaction destabilizes the capsid. In terms of assembly, homodimer, whose active site consists of two apposed aspartic acid residues. As to quaternary structure, heterodimer of p66 RT and p51 RT (RT p66/p51). Heterodimerization of RT is essential for DNA polymerase activity. The overall folding of the subdomains is similar in p66 RT and p51 RT but the spatial arrangements of the subdomains are dramatically different. Homotetramer; may further associate as a homohexadecamer. Part of the pre-integration complex (PIC) which is composed of viral genome, matrix protein, Vpr and integrase. Interacts with human SMARCB1/INI1 and human PSIP1/LEDGF isoform 1. Interacts with human KPNA3; this interaction might play a role in nuclear import of the pre-integration complex. Interacts with human NUP153; this interaction might play a role in nuclear import of the pre-integration complex. The cofactor is Mg(2+). In terms of processing, specific enzymatic cleavages by the viral protease yield mature proteins. The protease is released by autocatalytic cleavage. The polyprotein is cleaved during and after budding, this process is termed maturation. Proteolytic cleavage of p66 RT removes the RNase H domain to yield the p51 RT subunit. Nucleocapsid protein p7 might be further cleaved after virus entry.

The protein resides in the host cell membrane. It localises to the host endosome. Its subcellular location is the host multivesicular body. The protein localises to the virion membrane. It is found in the host nucleus. The protein resides in the host cytoplasm. It localises to the virion. The catalysed reaction is Endopeptidase for which the P1 residue is preferably hydrophobic.. It carries out the reaction Endohydrolysis of RNA in RNA/DNA hybrids. Three different cleavage modes: 1. sequence-specific internal cleavage of RNA. Human immunodeficiency virus type 1 and Moloney murine leukemia virus enzymes prefer to cleave the RNA strand one nucleotide away from the RNA-DNA junction. 2. RNA 5'-end directed cleavage 13-19 nucleotides from the RNA end. 3. DNA 3'-end directed cleavage 15-20 nucleotides away from the primer terminus.. It catalyses the reaction 3'-end directed exonucleolytic cleavage of viral RNA-DNA hybrid.. The enzyme catalyses DNA(n) + a 2'-deoxyribonucleoside 5'-triphosphate = DNA(n+1) + diphosphate. With respect to regulation, protease: The viral protease is inhibited by many synthetic protease inhibitors (PIs), such as amprenavir, atazanavir, indinavir, loprinavir, nelfinavir, ritonavir and saquinavir. Use of protease inhibitors in tritherapy regimens permit more ambitious therapeutic strategies. Reverse transcriptase/ribonuclease H: RT can be inhibited either by nucleoside RT inhibitors (NRTIs) or by non nucleoside RT inhibitors (NNRTIs). NRTIs act as chain terminators, whereas NNRTIs inhibit DNA polymerization by binding a small hydrophobic pocket near the RT active site and inducing an allosteric change in this region. Classical NRTIs are abacavir, adefovir (PMEA), didanosine (ddI), lamivudine (3TC), stavudine (d4T), tenofovir (PMPA), zalcitabine (ddC), and zidovudine (AZT). Classical NNRTIs are atevirdine (BHAP U-87201E), delavirdine, efavirenz (DMP-266), emivirine (I-EBU), and nevirapine (BI-RG-587). The tritherapies used as a basic effective treatment of AIDS associate two NRTIs and one NNRTI. Functionally, mediates, with Gag polyprotein, the essential events in virion assembly, including binding the plasma membrane, making the protein-protein interactions necessary to create spherical particles, recruiting the viral Env proteins, and packaging the genomic RNA via direct interactions with the RNA packaging sequence (Psi). Gag-Pol polyprotein may regulate its own translation, by the binding genomic RNA in the 5'-UTR. At low concentration, the polyprotein would promote translation, whereas at high concentration, the polyprotein would encapsidate genomic RNA and then shut off translation. In terms of biological role, targets the polyprotein to the plasma membrane via a multipartite membrane-binding signal, that includes its myristoylated N-terminus. Matrix protein is part of the pre-integration complex. Implicated in the release from host cell mediated by Vpu. Binds to RNA. Forms the conical core that encapsulates the genomic RNA-nucleocapsid complex in the virion. Most core are conical, with only 7% tubular. The core is constituted by capsid protein hexamer subunits. The core is disassembled soon after virion entry. Host restriction factors such as TRIM5-alpha or TRIMCyp bind retroviral capsids and cause premature capsid disassembly, leading to blocks in reverse transcription. Capsid restriction by TRIM5 is one of the factors which restricts HIV-1 to the human species. Host PIN1 apparently facilitates the virion uncoating. On the other hand, interactions with PDZD8 or CYPA stabilize the capsid. Its function is as follows. Encapsulates and protects viral dimeric unspliced genomic RNA (gRNA). Binds these RNAs through its zinc fingers. Acts as a nucleic acid chaperone which is involved in rearangement of nucleic acid secondary structure during gRNA retrotranscription. Also facilitates template switch leading to recombination. As part of the polyprotein, participates in gRNA dimerization, packaging, tRNA incorporation and virion assembly. Functionally, aspartyl protease that mediates proteolytic cleavages of Gag and Gag-Pol polyproteins during or shortly after the release of the virion from the plasma membrane. Cleavages take place as an ordered, step-wise cascade to yield mature proteins. This process is called maturation. Displays maximal activity during the budding process just prior to particle release from the cell. Also cleaves Nef and Vif, probably concomitantly with viral structural proteins on maturation of virus particles. Hydrolyzes host EIF4GI and PABP1 in order to shut off the capped cellular mRNA translation. The resulting inhibition of cellular protein synthesis serves to ensure maximal viral gene expression and to evade host immune response. In terms of biological role, multifunctional enzyme that converts the viral RNA genome into dsDNA in the cytoplasm, shortly after virus entry into the cell. This enzyme displays a DNA polymerase activity that can copy either DNA or RNA templates, and a ribonuclease H (RNase H) activity that cleaves the RNA strand of RNA-DNA heteroduplexes in a partially processive 3' to 5' endonucleasic mode. Conversion of viral genomic RNA into dsDNA requires many steps. A tRNA(3)-Lys binds to the primer-binding site (PBS) situated at the 5'-end of the viral RNA. RT uses the 3' end of the tRNA primer to perform a short round of RNA-dependent minus-strand DNA synthesis. The reading proceeds through the U5 region and ends after the repeated (R) region which is present at both ends of viral RNA. The portion of the RNA-DNA heteroduplex is digested by the RNase H, resulting in a ssDNA product attached to the tRNA primer. This ssDNA/tRNA hybridizes with the identical R region situated at the 3' end of viral RNA. This template exchange, known as minus-strand DNA strong stop transfer, can be either intra- or intermolecular. RT uses the 3' end of this newly synthesized short ssDNA to perform the RNA-dependent minus-strand DNA synthesis of the whole template. RNase H digests the RNA template except for two polypurine tracts (PPTs) situated at the 5'-end and near the center of the genome. It is not clear if both polymerase and RNase H activities are simultaneous. RNase H probably can proceed both in a polymerase-dependent (RNA cut into small fragments by the same RT performing DNA synthesis) and a polymerase-independent mode (cleavage of remaining RNA fragments by free RTs). Secondly, RT performs DNA-directed plus-strand DNA synthesis using the PPTs that have not been removed by RNase H as primers. PPTs and tRNA primers are then removed by RNase H. The 3' and 5' ssDNA PBS regions hybridize to form a circular dsDNA intermediate. Strand displacement synthesis by RT to the PBS and PPT ends produces a blunt ended, linear dsDNA copy of the viral genome that includes long terminal repeats (LTRs) at both ends. Catalyzes viral DNA integration into the host chromosome, by performing a series of DNA cutting and joining reactions. This enzyme activity takes place after virion entry into a cell and reverse transcription of the RNA genome in dsDNA. The first step in the integration process is 3' processing. This step requires a complex comprising the viral genome, matrix protein, Vpr and integrase. This complex is called the pre-integration complex (PIC). The integrase protein removes 2 nucleotides from each 3' end of the viral DNA, leaving recessed CA OH's at the 3' ends. In the second step, the PIC enters cell nucleus. This process is mediated through integrase and Vpr proteins, and allows the virus to infect a non dividing cell. This ability to enter the nucleus is specific of lentiviruses, other retroviruses cannot and rely on cell division to access cell chromosomes. In the third step, termed strand transfer, the integrase protein joins the previously processed 3' ends to the 5' ends of strands of target cellular DNA at the site of integration. The 5'-ends are produced by integrase-catalyzed staggered cuts, 5 bp apart. A Y-shaped, gapped, recombination intermediate results, with the 5'-ends of the viral DNA strands and the 3' ends of target DNA strands remaining unjoined, flanking a gap of 5 bp. The last step is viral DNA integration into host chromosome. This involves host DNA repair synthesis in which the 5 bp gaps between the unjoined strands are filled in and then ligated. Since this process occurs at both cuts flanking the HIV genome, a 5 bp duplication of host DNA is produced at the ends of HIV-1 integration. Alternatively, Integrase may catalyze the excision of viral DNA just after strand transfer, this is termed disintegration. The polypeptide is Gag-Pol polyprotein (gag-pol) (Human immunodeficiency virus type 2 subtype B (isolate UC1) (HIV-2)).